The following is a 333-amino-acid chain: Mitochondrial 2-oxoglutarate/malate carrier protein (333 aa).

Solcar repeat units follow at residues 29–127 (FRLI…LFER), 136–227 (PGFL…SKQF), and 236–325 (DNIL…MNKA). 6 consecutive transmembrane segments (helical) span residues 30–61 (RLIA…VQPL), 102–120 (GLSA…RLGI), 138–159 (FLLK…GTPA), 202–221 (GCIP…LASY), 241–259 (HFCA…SMPV), and 300–319 (GFTP…FIFL).

Belongs to the mitochondrial carrier (TC 2.A.29) family. Interacts with SMIM26.

The protein localises to the membrane. The catalysed reaction is (S)-malate(in) + 2-oxoglutarate(out) = (S)-malate(out) + 2-oxoglutarate(in). It carries out the reaction malonate(in) + 2-oxoglutarate(out) = malonate(out) + 2-oxoglutarate(in). It catalyses the reaction succinate(in) + 2-oxoglutarate(out) = succinate(out) + 2-oxoglutarate(in). The enzyme catalyses maleate(in) + 2-oxoglutarate(out) = maleate(out) + 2-oxoglutarate(in). The catalysed reaction is oxaloacetate(in) + 2-oxoglutarate(out) = oxaloacetate(out) + 2-oxoglutarate(in). In terms of biological role, catalyzes the transport of 2-oxoglutarate (alpha-oxoglutarate) across the inner mitochondrial membrane in an electroneutral exchange for malate. Can also exchange 2-oxoglutarate for other dicarboxylic acids such as malonate, succinate, maleate and oxaloacetate, although with lower affinity. Contributes to several metabolic processes, including the malate-aspartate shuttle, the oxoglutarate/isocitrate shuttle, in gluconeogenesis from lactate, and in nitrogen metabolism. Maintains mitochondrial fusion and fission events, and the organization and morphology of cristae. Involved in the regulation of apoptosis. Helps protect from cytotoxic-induced apoptosis by modulating glutathione levels in mitochondria. The protein is Mitochondrial 2-oxoglutarate/malate carrier protein (SLC25A11) of Sus scrofa (Pig).